A 162-amino-acid chain; its full sequence is Ribosome maturation factor RimP (162 aa).

It belongs to the RimP family.

Its subcellular location is the cytoplasm. In terms of biological role, required for maturation of 30S ribosomal subunits. The chain is Ribosome maturation factor RimP from Leptospira borgpetersenii serovar Hardjo-bovis (strain JB197).